A 231-amino-acid chain; its full sequence is Uroporphyrinogen-III C-methyltransferase (231 aa).

Residues Pro-10, 85–87 (GGD), 115–116 (TS), Met-166, and Ala-218 contribute to the S-adenosyl-L-homocysteine site.

The protein belongs to the precorrin methyltransferase family. As to quaternary structure, homodimer.

The enzyme catalyses uroporphyrinogen III + 2 S-adenosyl-L-methionine = precorrin-2 + 2 S-adenosyl-L-homocysteine + H(+). It carries out the reaction uroporphyrinogen III + S-adenosyl-L-methionine = precorrin-1 + S-adenosyl-L-homocysteine + H(+). The catalysed reaction is precorrin-1 + S-adenosyl-L-methionine = precorrin-2 + S-adenosyl-L-homocysteine. It participates in cofactor biosynthesis; adenosylcobalamin biosynthesis; precorrin-2 from uroporphyrinogen III: step 1/1. Does not show substrate inhibition at uroporphyrinogen III concentrations of up to 20 uM, in contrast to SUMT from Sinorhizobium (previously believed to be P.denitrificans). Its function is as follows. Catalyzes the two successive C-2 and C-7 methylation reactions involved in the conversion of uroporphyrinogen III to precorrin-2 via the intermediate formation of precorrin-1. It is a step in the biosynthesis of both cobalamin (vitamin B12) and coenzyme F430. This Methanobacterium ivanovii protein is Uroporphyrinogen-III C-methyltransferase (cobA).